The chain runs to 443 residues: UDP-N-acetylmuramate--L-alanine ligase (443 aa).

111–117 (GAHGKTS) contributes to the ATP binding site.

The protein belongs to the MurCDEF family.

It is found in the cytoplasm. The catalysed reaction is UDP-N-acetyl-alpha-D-muramate + L-alanine + ATP = UDP-N-acetyl-alpha-D-muramoyl-L-alanine + ADP + phosphate + H(+). It participates in cell wall biogenesis; peptidoglycan biosynthesis. Cell wall formation. The polypeptide is UDP-N-acetylmuramate--L-alanine ligase (Ligilactobacillus salivarius (strain UCC118) (Lactobacillus salivarius)).